We begin with the raw amino-acid sequence, 118 residues long: Large ribosomal subunit protein uL22 (118 aa).

It belongs to the universal ribosomal protein uL22 family. In terms of assembly, part of the 50S ribosomal subunit.

Functionally, this protein binds specifically to 23S rRNA; its binding is stimulated by other ribosomal proteins, e.g. L4, L17, and L20. It is important during the early stages of 50S assembly. It makes multiple contacts with different domains of the 23S rRNA in the assembled 50S subunit and ribosome. In terms of biological role, the globular domain of the protein is located near the polypeptide exit tunnel on the outside of the subunit, while an extended beta-hairpin is found that lines the wall of the exit tunnel in the center of the 70S ribosome. The polypeptide is Large ribosomal subunit protein uL22 (Thermomicrobium roseum (strain ATCC 27502 / DSM 5159 / P-2)).